We begin with the raw amino-acid sequence, 270 residues long: Mediator of RNA polymerase II transcription subunit 4 (270 aa).

The disordered stretch occupies residues Met1–Gly22. N-acetylalanine is present on Ala2. Coiled coils occupy residues Asn24 to Leu48 and His90 to Lys131. At Ser32 the chain carries Phosphoserine. The segment at Asp226–Asp270 is disordered. A compositionally biased stretch (low complexity) spans Ser259–Asp270.

This sequence belongs to the Mediator complex subunit 4 family. In terms of assembly, component of the Mediator complex, which is composed of MED1, MED4, MED6, MED7, MED8, MED9, MED10, MED11, MED12, MED13, MED13L, MED14, MED15, MED16, MED17, MED18, MED19, MED20, MED21, MED22, MED23, MED24, MED25, MED26, MED27, MED29, MED30, MED31, CCNC, CDK8 and CDC2L6/CDK11. The MED12, MED13, CCNC and CDK8 subunits form a distinct module termed the CDK8 module. Mediator containing the CDK8 module is less active than Mediator lacking this module in supporting transcriptional activation. Individual preparations of the Mediator complex lacking one or more distinct subunits have been variously termed ARC, CRSP, DRIP, PC2, SMCC and TRAP.

It localises to the nucleus. Its function is as follows. Component of the Mediator complex, a coactivator involved in the regulated transcription of nearly all RNA polymerase II-dependent genes. Mediator functions as a bridge to convey information from gene-specific regulatory proteins to the basal RNA polymerase II transcription machinery. Mediator is recruited to promoters by direct interactions with regulatory proteins and serves as a scaffold for the assembly of a functional preinitiation complex with RNA polymerase II and the general transcription factors. In Homo sapiens (Human), this protein is Mediator of RNA polymerase II transcription subunit 4 (MED4).